We begin with the raw amino-acid sequence, 295 residues long: Protoheme IX farnesyltransferase 2 (295 aa).

Helical transmembrane passes span 9 to 29 (ITKP…FFLA), 36 to 56 (FALF…GCVF), 83 to 103 (LPLA…LLYV), 108 to 128 (LSAF…SLWL), 135 to 155 (GTLV…CAVS), 163 to 183 (VTLL…IAIF), 209 to 229 (IVLY…GGYA), 230 to 250 (GLGY…MAWG), and 264 to 284 (VFGF…VDSQ).

Belongs to the UbiA prenyltransferase family. Protoheme IX farnesyltransferase subfamily.

It localises to the cell inner membrane. It carries out the reaction heme b + (2E,6E)-farnesyl diphosphate + H2O = Fe(II)-heme o + diphosphate. The protein operates within porphyrin-containing compound metabolism; heme O biosynthesis; heme O from protoheme: step 1/1. In terms of biological role, converts heme B (protoheme IX) to heme O by substitution of the vinyl group on carbon 2 of heme B porphyrin ring with a hydroxyethyl farnesyl side group. In Pseudomonas putida (strain ATCC 47054 / DSM 6125 / CFBP 8728 / NCIMB 11950 / KT2440), this protein is Protoheme IX farnesyltransferase 2.